The primary structure comprises 201 residues: Testis-expressed protein 38 (201 aa).

Residues 3 to 23 form a helical membrane-spanning segment; the sequence is ISLCIGFLGLCSVLIGSCILF.

Its subcellular location is the membrane. The protein is Testis-expressed protein 38 (Tex38) of Mus musculus (Mouse).